The chain runs to 161 residues: Allophycocyanin alpha chain (161 aa).

An N4-methylasparagine modification is found at Asn71. Position 81 (Cys81) interacts with (2R,3E)-phycocyanobilin.

This sequence belongs to the phycobiliprotein family. Heterodimer of an alpha and a beta chain. Post-translationally, contains one covalently linked phycocyanobilin chromophore.

The protein localises to the plastid. Its subcellular location is the chloroplast thylakoid membrane. In terms of biological role, light-harvesting photosynthetic bile pigment-protein from the phycobiliprotein complex. Allophycocyanin has a maximum absorption at approximately 650 nanometers. The protein is Allophycocyanin alpha chain (apcA) of Aglaothamnion neglectum (Red alga).